A 480-amino-acid polypeptide reads, in one-letter code: Bifunctional protein HldE (480 aa).

The tract at residues 1-316 is ribokinase; the sequence is MNMHDFSKTK…EQLNASMRHQ (316 aa). 192–195 serves as a coordination point for ATP; sequence NQGE. Aspartate 261 is an active-site residue. A cytidylyltransferase region spans residues 342 to 480; sequence FTNGCFDLLH…EAEIKEGAAQ (139 aa).

In the N-terminal section; belongs to the carbohydrate kinase PfkB family. This sequence in the C-terminal section; belongs to the cytidylyltransferase family. As to quaternary structure, homodimer.

It catalyses the reaction D-glycero-beta-D-manno-heptose 7-phosphate + ATP = D-glycero-beta-D-manno-heptose 1,7-bisphosphate + ADP + H(+). The catalysed reaction is D-glycero-beta-D-manno-heptose 1-phosphate + ATP + H(+) = ADP-D-glycero-beta-D-manno-heptose + diphosphate. The protein operates within nucleotide-sugar biosynthesis; ADP-L-glycero-beta-D-manno-heptose biosynthesis; ADP-L-glycero-beta-D-manno-heptose from D-glycero-beta-D-manno-heptose 7-phosphate: step 1/4. It functions in the pathway nucleotide-sugar biosynthesis; ADP-L-glycero-beta-D-manno-heptose biosynthesis; ADP-L-glycero-beta-D-manno-heptose from D-glycero-beta-D-manno-heptose 7-phosphate: step 3/4. Functionally, catalyzes the phosphorylation of D-glycero-D-manno-heptose 7-phosphate at the C-1 position to selectively form D-glycero-beta-D-manno-heptose-1,7-bisphosphate. Catalyzes the ADP transfer from ATP to D-glycero-beta-D-manno-heptose 1-phosphate, yielding ADP-D-glycero-beta-D-manno-heptose. This chain is Bifunctional protein HldE, found in Hydrogenovibrio crunogenus (strain DSM 25203 / XCL-2) (Thiomicrospira crunogena).